The sequence spans 361 residues: Ribosomal RNA large subunit methyltransferase M (361 aa).

Residues serine 187, 220-223 (CPGG), aspartate 239, aspartate 259, and aspartate 276 contribute to the S-adenosyl-L-methionine site. The active-site Proton acceptor is the lysine 305.

This sequence belongs to the class I-like SAM-binding methyltransferase superfamily. RNA methyltransferase RlmE family. RlmM subfamily. As to quaternary structure, monomer.

It is found in the cytoplasm. The catalysed reaction is cytidine(2498) in 23S rRNA + S-adenosyl-L-methionine = 2'-O-methylcytidine(2498) in 23S rRNA + S-adenosyl-L-homocysteine + H(+). Functionally, catalyzes the 2'-O-methylation at nucleotide C2498 in 23S rRNA. The polypeptide is Ribosomal RNA large subunit methyltransferase M (Shewanella sp. (strain ANA-3)).